The sequence spans 29 residues: GLPCGETCFTGKCYTPGCSCSYPICKKIN.

Positions 1-29 (GLPCGETCFTGKCYTPGCSCSYPICKKIN) form a cross-link, cyclopeptide (Gly-Asn). 3 cysteine pairs are disulfide-bonded: cysteine 4–cysteine 18, cysteine 8–cysteine 20, and cysteine 13–cysteine 25.

In terms of processing, this is a cyclic peptide.

Functionally, probably participates in a plant defense mechanism. The polypeptide is Cycloviolacin-O16 (Viola odorata (Sweet violet)).